A 611-amino-acid polypeptide reads, in one-letter code: Elongation factor 1 alpha-like protein (611 aa).

Disordered stretches follow at residues 1 to 21 (MAYS…DEGE) and 105 to 138 (SISQ…DEKT). The residue at position 124 (Ser124) is a Phosphoserine. Residues 126–138 (GERNGEEANDEKT) are compositionally biased toward basic and acidic residues. Residues 165 to 390 (LPHLSFVVLG…LENAAFKISK (226 aa)) form the tr-type G domain. Residues 174-181 (GHVDAGKS) form a G1 region. 174–181 (GHVDAGKS) is a binding site for GTP. Residues 230–234 (GVTVS) are G2. Positions 251–254 (DAPG) are G3. Residues 313-316 (NKMD) and 352-354 (SGF) each bind GTP. The interval 313-316 (NKMD) is G4. The G5 stretch occupies residues 352–354 (SGF).

It belongs to the TRAFAC class translation factor GTPase superfamily. Classic translation factor GTPase family. Component of the Dom34-Hbs1 complex, also named Pelota-HBS1L complex, composed of DOM34 and HBS1.

It is found in the cytoplasm. It catalyses the reaction GTP + H2O = GDP + phosphate + H(+). In terms of biological role, GTPase component of the Dom34-Hbs1 complex, a complex that recognizes stalled ribosomes and triggers the No-Go Decay (NGD) pathway. The Dom34-Hbs1 complex recognizes ribosomes stalled at the 3' end of an mRNA and engages stalled ribosomes by destabilizing mRNA in the mRNA channel. Following ribosome-binding, the Pelota-HBS1L complex promotes the disassembly of stalled ribosomes, followed by degradation of damaged mRNAs as part of the NGD pathway. The Dom34-Hbs1 complex is also involved in non-functional rRNA decay. This chain is Elongation factor 1 alpha-like protein, found in Saccharomyces cerevisiae (strain ATCC 204508 / S288c) (Baker's yeast).